The chain runs to 311 residues: Protein nfe2 (311 aa).

Functionally, responsible for the nodulation efficiency and competitive ability of strain GR4 on alfalfa roots. This is Protein nfe2 (nfe2) from Rhizobium meliloti (Ensifer meliloti).